Reading from the N-terminus, the 381-residue chain is Queuine tRNA-ribosyltransferase (381 aa).

D96 serves as the catalytic Proton acceptor. Residues D96 to F100, D150, Q193, and G220 contribute to the substrate site. The interval G251–S257 is RNA binding. Catalysis depends on D270, which acts as the Nucleophile. Positions T275–R279 are RNA binding; important for wobble base 34 recognition. Zn(2+)-binding residues include C308, C310, C313, and H339.

Belongs to the queuine tRNA-ribosyltransferase family. Homodimer. Within each dimer, one monomer is responsible for RNA recognition and catalysis, while the other monomer binds to the replacement base PreQ1. It depends on Zn(2+) as a cofactor.

The catalysed reaction is 7-aminomethyl-7-carbaguanine + guanosine(34) in tRNA = 7-aminomethyl-7-carbaguanosine(34) in tRNA + guanine. It participates in tRNA modification; tRNA-queuosine biosynthesis. In terms of biological role, catalyzes the base-exchange of a guanine (G) residue with the queuine precursor 7-aminomethyl-7-deazaguanine (PreQ1) at position 34 (anticodon wobble position) in tRNAs with GU(N) anticodons (tRNA-Asp, -Asn, -His and -Tyr). Catalysis occurs through a double-displacement mechanism. The nucleophile active site attacks the C1' of nucleotide 34 to detach the guanine base from the RNA, forming a covalent enzyme-RNA intermediate. The proton acceptor active site deprotonates the incoming PreQ1, allowing a nucleophilic attack on the C1' of the ribose to form the product. After dissociation, two additional enzymatic reactions on the tRNA convert PreQ1 to queuine (Q), resulting in the hypermodified nucleoside queuosine (7-(((4,5-cis-dihydroxy-2-cyclopenten-1-yl)amino)methyl)-7-deazaguanosine). The chain is Queuine tRNA-ribosyltransferase from Enterococcus faecalis (strain ATCC 700802 / V583).